A 970-amino-acid chain; its full sequence is Protein tweety (970 aa).

The Extracellular segment spans residues 1–47 (MGDYHEFTDQYKVPVIAKLLHALPHYNITFHKINSTFRPNDEIYLES). Residues Asn27 and Asn34 are each glycosylated (N-linked (GlcNAc...) asparagine). A helical membrane pass occupies residues 48–68 (LGILGSVPAALLIVSLLGLLF). Topologically, residues 69–89 (YLMTRCCDRKPRPAHSITSLK) are cytoplasmic. A helical membrane pass occupies residues 90–110 (VALSIVTVMCCAAIGLGLYGN). Topologically, residues 111–219 (DDLHNGLLEV…GDQWELIRWP (109 aa)) are extracellular. 3 N-linked (GlcNAc...) asparagine glycosylation sites follow: Asn136, Asn166, and Asn183. A helical membrane pass occupies residues 220-240 (GTVATLALLLVLCAVLLVGVA). Residues 241–246 (RHSRCA) lie on the Cytoplasmic side of the membrane. Residues 247 to 267 (LILFSVCGLLAVTGSWLMSGL) traverse the membrane as a helical segment. Topologically, residues 268–395 (YLSSSVAVGD…RGLCEGGLLG (128 aa)) are extracellular. N-linked (GlcNAc...) asparagine glycosylation occurs at Asn359. Residues 396 to 416 (LVLMLIASFIAAILLTIMVWV) form a helical membrane-spanning segment. At 417-970 (DSHTWIYIRK…DESNYAVTEL (554 aa)) the chain is on the cytoplasmic side. The span at 532-571 (NAAANMPPTTQAAQQQQQQQAQQQQQQAQQQLGGPQPIYC) shows a compositional bias: low complexity. 3 disordered regions span residues 532–587 (NAAA…QHPH), 677–763 (RQNS…NESD), and 849–970 (MKAI…VTEL). The segment covering 572-587 (HHPHQHPHPHPHQHPH) has biased composition (basic residues). Low complexity-rich tracts occupy residues 689–700 (HQHPPSLHQQQQ), 707–737 (QQQQ…QQHH), and 745–759 (QHQQ…QQQP). The span at 852–868 (IPPPRIGTPTSPPPPVA) shows a compositional bias: pro residues. 2 stretches are compositionally biased toward gly residues: residues 883–894 (QNGGAVVGGGGA) and 931–945 (NGGG…GGGA). Residues 961–970 (DESNYAVTEL) are compositionally biased toward polar residues.

The protein belongs to the tweety family.

The protein resides in the cell membrane. Its function is as follows. Non-essential protein that probably acts as a chloride channel. This chain is Protein tweety (tty), found in Drosophila melanogaster (Fruit fly).